Here is a 210-residue protein sequence, read N- to C-terminus: Dynactin-associated protein (210 aa).

At 1–113 the chain is on the cytoplasmic side; sequence MVADIKGNEQ…YCRNDWSMWK (113 aa). The chain crosses the membrane as a helical; Signal-anchor for type II membrane protein span at residues 114–134; the sequence is VFLACLLACVIMTAIGVLIIC. Topologically, residues 135–210 are extracellular; the sequence is LVNNKGSANS…PITVAPTDHL (76 aa). The tract at residues 168–210 is disordered; sequence ACPPTMTTTSTVPASTATESTTSTATAATTSTEPITVAPTDHL. Low complexity predominate over residues 171–203; the sequence is PTMTTTSTVPASTATESTTSTATAATTSTEPIT.

Interacts with DCTN1 and DCTN2. As to expression, expressed in fibroblast and numerous cancer cell lines (at protein level).

It localises to the golgi apparatus membrane. The protein localises to the cell membrane. Functionally, plays a role in the regulation of cell proliferation. Promotes activation of the AKT1 signaling pathway. Promotes phosphorylation of AKT1 at 'Ser-473'. This is Dynactin-associated protein (DYNAP) from Homo sapiens (Human).